The chain runs to 95 residues: Small ribosomal subunit protein bS6 (95 aa).

This sequence belongs to the bacterial ribosomal protein bS6 family.

Its function is as follows. Binds together with bS18 to 16S ribosomal RNA. In Clostridium acetobutylicum (strain ATCC 824 / DSM 792 / JCM 1419 / IAM 19013 / LMG 5710 / NBRC 13948 / NRRL B-527 / VKM B-1787 / 2291 / W), this protein is Small ribosomal subunit protein bS6.